The primary structure comprises 84 residues: Metallothionein-like protein 4A (84 aa).

The disordered stretch occupies residues 1 to 26 (MADTGKGSSVAGCNDSCGCPSPCPGG).

This sequence belongs to the metallothionein superfamily. Type 15 family. As to expression, expressed specifically in seeds.

It is found in the cytoplasm. It localises to the nucleus. The protein localises to the cell membrane. Metallothioneins have a high content of cysteine residues that bind various heavy metals. Functions as a metal chelator of copper (Cu) and zinc (Zn). Plays a role in storing and distributing Zn ion in seed. This chain is Metallothionein-like protein 4A (MT4A), found in Arabidopsis thaliana (Mouse-ear cress).